The chain runs to 232 residues: Fibrillarin-like rRNA/tRNA 2'-O-methyltransferase (232 aa).

S-adenosyl-L-methionine is bound by residues 87–88 (TT), 105–106 (EF), 130–131 (DA), and 150–153 (DVAQ).

The protein belongs to the methyltransferase superfamily. Fibrillarin family. As to quaternary structure, interacts with nop5. Component of box C/D small ribonucleoprotein (sRNP) particles that contain rpl7ae, FlpA and nop5, plus a guide RNA.

Involved in pre-rRNA and tRNA processing. Utilizes the methyl donor S-adenosyl-L-methionine to catalyze the site-specific 2'-hydroxyl methylation of ribose moieties in rRNA and tRNA. Site specificity is provided by a guide RNA that base pairs with the substrate. Methylation occurs at a characteristic distance from the sequence involved in base pairing with the guide RNA. This Methanococcus maripaludis (strain C7 / ATCC BAA-1331) protein is Fibrillarin-like rRNA/tRNA 2'-O-methyltransferase.